We begin with the raw amino-acid sequence, 3421 residues long: Hemocyanin 2 (3421 aa).

The signal sequence occupies residues 1–19 (MWTILALLTATLLFEGAFS). Residues 20-442 (VDTVVRKNVD…KPPVPVAQAN (423 aa)) form a functional unit a (wall) region. Histidine 62 lines the Cu cation pocket. Cysteine 68 and cysteine 78 form a disulfide bridge. Residues 79–81 (CLH) constitute a cross-link (2'-(S-cysteinyl)-histidine (Cys-His)). Cu cation is bound by residues histidine 81, histidine 90, histidine 200, histidine 204, and histidine 231. 2 disulfide bridges follow: cysteine 190-cysteine 257 and cysteine 344-cysteine 356. A glycan (N-linked (GlcNAc...) asparagine) is linked at asparagine 408. The interval 443 to 853 (LAVRKNINDL…RADAKDFGHS (411 aa)) is functional unit b (wall). Histidine 483 contributes to the Cu cation binding site. The cysteines at positions 489 and 500 are disulfide-linked. A cross-link (2'-(S-cysteinyl)-histidine (Cys-His)) is located at residues 501–503 (CVH). Cu cation contacts are provided by histidine 503, histidine 512, histidine 622, histidine 626, histidine 653, and histidine 894. Cysteine 612 and cysteine 678 are disulfide-bonded. The stretch at 632–673 (SEKYSMSSLHYTAFDPIFYLHHSNVDRLWAIWQALQIRRGKS) is one WD 1 repeat. A functional unit c (wall) region spans residues 854–1275 (RKIRKAVDSL…DEYREAVTSA (422 aa)). A disulfide bridge links cysteine 900 with cysteine 911. The segment at residues 912–914 (CVH) is a cross-link (2'-(S-cysteinyl)-histidine (Cys-His)). Residues histidine 914, histidine 923, histidine 1033, histidine 1037, and histidine 1063 each coordinate Cu cation. Disulfide bonds link cysteine 1023/cysteine 1090 and cysteine 1180/cysteine 1187. The WD 2 repeat unit spans residues 1043-1084 (NEPYSMSSLRYTTYDPIFFLHRSNTDRLWAIWQALQKYRGKP). A glycan (N-linked (GlcNAc...) asparagine) is linked at asparagine 1183. Residues 1276–1685 (SHIRKNIRDL…NIYYDGLSQH (410 aa)) are functional unit d (wall). A Cu cation-binding site is contributed by histidine 1313. A disulfide bridge connects residues cysteine 1319 and cysteine 1328. The segment at residues 1329–1331 (CVH) is a cross-link (2'-(S-cysteinyl)-histidine (Cys-His)). Histidine 1331 and histidine 1340 together coordinate Cu cation. One copy of the WD 3 repeat lies at 1387–1425 (QTFDPNPFFRGHIAFENAVTSRDPQPELWDNKDFYENVM). Intrachain disulfides connect cysteine 1434–cysteine 1501 and cysteine 1590–cysteine 1599. Residues histidine 1444, histidine 1448, and histidine 1475 each contribute to the Cu cation site. One copy of the WD 4 repeat lies at 1454 to 1495 (RAKYSLSSLDYTAFDPVFFLHHANVDRIWAIWQDLQRYRKKP). N-linked (GlcNAc...) asparagine glycosylation is present at asparagine 1653. The tract at residues 1686–2102 (NLVRKEVSSL…HGINVRHVGR (417 aa)) is functional unit e (wall). Histidine 1726 is a binding site for Cu cation. Residues cysteine 1732 and cysteine 1743 are joined by a disulfide bond. Positions 1744–1746 (CLH) form a cross-link, 2'-(S-cysteinyl)-histidine (Cys-His). Histidine 1746, histidine 1755, histidine 1868, histidine 1872, and histidine 1899 together coordinate Cu cation. 2 disulfides stabilise this stretch: cysteine 1858/cysteine 1925 and cysteine 2014/cysteine 2020. The stretch at 1878-1919 (SKTHSIGHLHYASYDPLFYIHHSQTDRIWAIWQALQEHRGLS) is one WD 5 repeat. Positions 2103–2522 (NRIRMELSEL…DDHGSDHIAG (420 aa)) are functional unit f (wall). Cu cation is bound at residue histidine 2143. The cysteines at positions 2149 and 2159 are disulfide-linked. Residues 2160 to 2162 (CIH) constitute a cross-link (2'-(S-cysteinyl)-histidine (Cys-His)). Residues histidine 2162, histidine 2171, histidine 2281, histidine 2285, and histidine 2312 each contribute to the Cu cation site. The WD 6 repeat unit spans residues 2168–2204 (PHWHRLYTLQMDMALLSHGSAVAIPYWDWTKPISKLP). Disulfide bonds link cysteine 2271–cysteine 2338 and cysteine 2425–cysteine 2431. The tract at residues 2523–2929 (SGVRKDVTSL…SGHDHSERHD (407 aa)) is functional unit g (internal arc). Histidine 2563 is a Cu cation binding site. Cysteine 2569 and cysteine 2579 form a disulfide bridge. The 2'-(S-cysteinyl)-histidine (Cys-His) cross-link spans 2580 to 2582 (CTH). Cu cation-binding residues include histidine 2582, histidine 2591, histidine 2691, histidine 2695, and histidine 2722. 2 cysteine pairs are disulfide-bonded: cysteine 2681–cysteine 2748 and cysteine 2835–cysteine 2841. The WD 7 repeat unit spans residues 2700 to 2742 (GHTPYGMSSLEYTAYDPLFYLHHSNTDRIWAIWQALQKYRGFQ). The tract at residues 2898–2927 (PSDRIKSPTIEHHGGDHHGGDTSGHDHSER) is disordered. The segment at 2930–3421 (GFFRKEVGSL…VRIHIHIEDE (492 aa)) is functional unit h (internal slab). Residue histidine 2970 coordinates Cu cation. The cysteines at positions 2976 and 2986 are disulfide-linked. A cross-link (2'-(S-cysteinyl)-histidine (Cys-His)) is located at residues 2987–2989 (CVH). Residues histidine 2989, histidine 2998, histidine 3099, histidine 3103, and histidine 3130 each contribute to the Cu cation site. Intrachain disulfides connect cysteine 3089–cysteine 3156 and cysteine 3374–cysteine 3407. The WD 8 repeat unit spans residues 3109 to 3150 (TETYSMSSLAFSAYDPVFMILHSGLDRLWIIWQELQKLRKKP).

The protein belongs to the tyrosinase family. Hemocyanin subfamily. Homo-didecamer and homo-multidecamer. Probably N-glycosylated. Asn-2489 is buried deeply in the protein which make it inaccessible for sugar attachment. In terms of tissue distribution, hemolymph.

It is found in the secreted. It localises to the extracellular space. Functionally, hemocyanins are copper-containing oxygen carriers occurring freely dissolved in the hemolymph of many mollusks and arthropods. This Megathura crenulata (Giant keyhole limpet) protein is Hemocyanin 2.